Here is a 400-residue protein sequence, read N- to C-terminus: MRPDKKNLSSLSAATLAVHGGNVADATSGAVRTPLVMANSYLLPEDPATMDWSSPDGLVYTRNQGHNQVCLEKKLAALEGCEAAVVFATGVAALHSVFFSFLKSGDHVIVSDITYQAVWRLFAELLPERYGIEATFVDVGDLDSVRQALRPNTRLIHTEVIANPTTKVADIGALTEIAHAHGALISVDATFTPPPFFRASQQGVDFVVHSLTKYINGHGDAMGGVVIGTQRMIDKIKNDALVDLGATISPFNAWMIMRGSVTLPLRLNQLLSSAGKIAEFLDSDDRIAYVYYPGLASHPQHELARRQFAGKGYGAMMAFAVKGDPDTQNRFVSNLRIITSAVSLGHDESLIVHVGAEGRGGFDKYPEEFRQYGHLRFSVGLEDPEDLISDITAALDETFK.

The residue at position 213 (lysine 213) is an N6-(pyridoxal phosphate)lysine.

It belongs to the trans-sulfuration enzymes family. Requires pyridoxal 5'-phosphate as cofactor.

It carries out the reaction L-canavanine + H2O = N-hydroxyguanidine + L-homoserine. Lyase involved in the degradation of canavanine, the delta-oxa-analog of arginine, allowing growth on canavanine as sole nitrogen and carbon source. Catalyzes the elimination of hydroxyguanidine from canavanine with a subsequent water addition to yield homoserine. Is highly specific for canavanine and cannot use methionine, cystathionine or arginine. This Pseudomonas canavaninivorans protein is Canavanine gamma-lyase.